The following is a 192-amino-acid chain: Ion-translocating oxidoreductase complex subunit A (192 aa).

Helical transmembrane passes span 5–25 (LLLL…FLGL), 39–59 (IGMS…SYLV), 72–92 (LRTM…EMLV), 102–122 (ALGI…VALL), 134–154 (AIYG…FSAM), and 171–191 (AIAM…TGLV).

This sequence belongs to the NqrDE/RnfAE family. The complex is composed of six subunits: RnfA, RnfB, RnfC, RnfD, RnfE and RnfG.

The protein localises to the cell inner membrane. Functionally, part of a membrane-bound complex that couples electron transfer with translocation of ions across the membrane. The polypeptide is Ion-translocating oxidoreductase complex subunit A (Shewanella loihica (strain ATCC BAA-1088 / PV-4)).